A 61-amino-acid polypeptide reads, in one-letter code: Large ribosomal subunit protein uL30 (61 aa).

The protein belongs to the universal ribosomal protein uL30 family. In terms of assembly, part of the 50S ribosomal subunit.

In Methylococcus capsulatus (strain ATCC 33009 / NCIMB 11132 / Bath), this protein is Large ribosomal subunit protein uL30.